Here is a 601-residue protein sequence, read N- to C-terminus: Probable translation initiation factor IF-2 (601 aa).

One can recognise a tr-type G domain in the interval 14-229; it reads LRTPIVAVLG…VMMGLSQRYM (216 aa). Residues 23–30 form a G1 region; it reads GHVDHGKT. A GTP-binding site is contributed by 23–30; sequence GHVDHGKT. Residues 48-52 form a G2 region; sequence AITQH. Residues 85–88 are G3; that stretch reads DTPG. GTP is bound by residues 85 to 89 and 139 to 142; these read DTPGH and NKID. Positions 139–142 are G4; that stretch reads NKID. The G5 stretch occupies residues 207 to 209; the sequence is SAE.

The protein belongs to the TRAFAC class translation factor GTPase superfamily. Classic translation factor GTPase family. IF-2 subfamily.

Its function is as follows. Function in general translation initiation by promoting the binding of the formylmethionine-tRNA to ribosomes. Seems to function along with eIF-2. This Haloarcula marismortui (strain ATCC 43049 / DSM 3752 / JCM 8966 / VKM B-1809) (Halobacterium marismortui) protein is Probable translation initiation factor IF-2.